A 481-amino-acid polypeptide reads, in one-letter code: ATP synthase subunit beta, chloroplastic (481 aa).

An ATP-binding site is contributed by 162 to 169; sequence GGAGVGKT.

The protein belongs to the ATPase alpha/beta chains family. In terms of assembly, F-type ATPases have 2 components, F(1) - the catalytic core - and F(0) - the membrane proton channel. F(1) has five subunits: alpha(3), beta(3), gamma(1), delta(1), epsilon(1). F(0) has four main subunits: a(1), b(1), b'(1) and c(10-14). The alpha and beta chains form an alternating ring which encloses part of the gamma chain. F(1) is attached to F(0) by a central stalk formed by the gamma and epsilon chains, while a peripheral stalk is formed by the delta, b and b' chains.

The protein resides in the plastid. Its subcellular location is the chloroplast thylakoid membrane. It carries out the reaction ATP + H2O + 4 H(+)(in) = ADP + phosphate + 5 H(+)(out). Functionally, f(1)F(0) ATP synthase produces ATP from ADP in the presence of a proton or sodium gradient. F-type ATPases consist of two structural domains, F(1) containing the extramembraneous catalytic core and F(0) containing the membrane proton channel, linked together by a central stalk and a peripheral stalk. During catalysis, ATP synthesis in the catalytic domain of F(1) is coupled via a rotary mechanism of the central stalk subunits to proton translocation. In terms of biological role, produces ATP from ADP in the presence of a proton gradient across the membrane. The catalytic sites are hosted primarily by the beta subunits. The protein is ATP synthase subunit beta, chloroplastic of Chlamydomonas reinhardtii (Chlamydomonas smithii).